Reading from the N-terminus, the 338-residue chain is Glyceraldehyde-3-phosphate dehydrogenase (338 aa).

NAD(+)-binding positions include 12-13, Asp34, and Arg79; that span reads RI. D-glyceraldehyde 3-phosphate-binding positions include 150-152, Thr181, 210-211, and Arg233; these read SCT and TG. Cys151 acts as the Nucleophile in catalysis. Position 316 (Asn316) interacts with NAD(+).

This sequence belongs to the glyceraldehyde-3-phosphate dehydrogenase family. As to quaternary structure, homotetramer.

It localises to the cytoplasm. The catalysed reaction is D-glyceraldehyde 3-phosphate + phosphate + NAD(+) = (2R)-3-phospho-glyceroyl phosphate + NADH + H(+). Its pathway is carbohydrate degradation; glycolysis; pyruvate from D-glyceraldehyde 3-phosphate: step 1/5. The chain is Glyceraldehyde-3-phosphate dehydrogenase (GPD) from Yarrowia lipolytica (strain CLIB 122 / E 150) (Yeast).